A 281-amino-acid chain; its full sequence is Nucleoid occlusion protein (281 aa).

The disordered stretch occupies residues Met-1–Glu-24. A DNA-binding region (H-T-H motif) is located at residues Glu-145–Leu-164.

It belongs to the ParB family.

Its subcellular location is the cytoplasm. It localises to the nucleoid. Effects nucleoid occlusion by binding relatively nonspecifically to DNA and preventing the assembly of the division machinery in the vicinity of the nucleoid, especially under conditions that disturb the cell cycle. It helps to coordinate cell division and chromosome segregation by preventing the formation of the Z ring through the nucleoid, which would cause chromosome breakage. This is Nucleoid occlusion protein from Geobacillus kaustophilus (strain HTA426).